The following is a 124-amino-acid chain: Large ribosomal subunit protein bL12 (124 aa).

The protein belongs to the bacterial ribosomal protein bL12 family. In terms of assembly, homodimer. Part of the ribosomal stalk of the 50S ribosomal subunit. Forms a multimeric L10(L12)X complex, where L10 forms an elongated spine to which 2 to 4 L12 dimers bind in a sequential fashion. Binds GTP-bound translation factors.

Forms part of the ribosomal stalk which helps the ribosome interact with GTP-bound translation factors. Is thus essential for accurate translation. This chain is Large ribosomal subunit protein bL12, found in Wolinella succinogenes (strain ATCC 29543 / DSM 1740 / CCUG 13145 / JCM 31913 / LMG 7466 / NCTC 11488 / FDC 602W) (Vibrio succinogenes).